The primary structure comprises 944 residues: ATP-dependent helicase fft1 (944 aa).

Disordered stretches follow at residues alanine 89–asparagine 109 and serine 174–proline 246. Over residues aspartate 92–serine 108 the composition is skewed to basic and acidic residues. A compositionally biased stretch (polar residues) spans serine 174 to glutamate 184. A compositionally biased stretch (basic and acidic residues) spans serine 186–threonine 203. The span at leucine 217–leucine 227 shows a compositional bias: acidic residues. The segment covering glutamine 230 to proline 246 has biased composition (polar residues). The 167-residue stretch at cysteine 426–lysine 592 folds into the Helicase ATP-binding domain. Residue aspartate 439–threonine 446 coordinates ATP. The DEGH box motif lies at aspartate 543 to histidine 546. The Helicase C-terminal domain occupies lysine 766–serine 923.

It belongs to the SNF2/RAD54 helicase family.

Its subcellular location is the nucleus. It carries out the reaction ATP + H2O = ADP + phosphate + H(+). Its function is as follows. DNA helicase that possesses intrinsic ATP-dependent nucleosome-remodeling activity and is required for heterochromatin organization. This is ATP-dependent helicase fft1 (fft1) from Schizosaccharomyces pombe (strain 972 / ATCC 24843) (Fission yeast).